We begin with the raw amino-acid sequence, 367 residues long: Methylated-thiol--coenzyme M methyltransferase (367 aa).

Positions 236, 238, and 313 each coordinate Zn(2+).

This sequence belongs to the uroporphyrinogen decarboxylase family. As to quaternary structure, homodimer. It depends on Zn(2+) as a cofactor.

It carries out the reaction methanethiol + coenzyme M = methyl-coenzyme M + hydrogen sulfide + H(+). Methyltransferase involved in methanogenesis from methylated-thiols. Catalyzes two successive steps: mediates the transfer of a methyl group from the substrate to the cobalt cofactor of a methylated-thiol-specific corrinoid protein (MtsB), and the subsequent transfer of the methyl group from the corrinoid protein to coenzyme M. This is Methylated-thiol--coenzyme M methyltransferase (mtsA) from Methanosarcina mazei (strain ATCC BAA-159 / DSM 3647 / Goe1 / Go1 / JCM 11833 / OCM 88) (Methanosarcina frisia).